The sequence spans 168 residues: Coiled-coil domain-containing protein 200 (168 aa).

Positions 16 to 50 (LDRRRWLMAQQQQELQQKEQELKNHQEEEQQSEEK) form a coiled coil. Residues 23 to 168 (MAQQQQELQQ…LKSTNYIQQW (146 aa)) form a disordered region. A compositionally biased stretch (basic and acidic residues) spans 31-52 (QQKEQELKNHQEEEQQSEEKLQ). Residues 70–82 (SQEQPQPSQQQPS) are compositionally biased toward low complexity. Pro residues-rich tracts occupy residues 83 to 94 (VQPPSQPPPQPS) and 104 to 117 (GPQP…PQPT). 2 stretches are compositionally biased toward polar residues: residues 124–138 (RCTQ…QDSQ) and 145–168 (PCQS…IQQW).

The protein is Coiled-coil domain-containing protein 200 of Homo sapiens (Human).